The sequence spans 343 residues: N-acetyl-gamma-glutamyl-phosphate reductase (343 aa).

The active site involves cysteine 149.

It belongs to the NAGSA dehydrogenase family. Type 1 subfamily.

The protein resides in the cytoplasm. The enzyme catalyses N-acetyl-L-glutamate 5-semialdehyde + phosphate + NADP(+) = N-acetyl-L-glutamyl 5-phosphate + NADPH + H(+). Its pathway is amino-acid biosynthesis; L-arginine biosynthesis; N(2)-acetyl-L-ornithine from L-glutamate: step 3/4. Catalyzes the NADPH-dependent reduction of N-acetyl-5-glutamyl phosphate to yield N-acetyl-L-glutamate 5-semialdehyde. The sequence is that of N-acetyl-gamma-glutamyl-phosphate reductase from Methanococcus maripaludis (strain C5 / ATCC BAA-1333).